The following is a 188-amino-acid chain: Thymidine kinase (188 aa).

17–24 (GPMFAGKT) lines the ATP pocket. The active-site Proton acceptor is the Glu92. Phe121 is a substrate binding site. The Zn(2+) site is built by Cys146 and Cys149. 166–170 (LILAG) provides a ligand contact to substrate. Zn(2+) contacts are provided by Cys179 and Cys182.

The protein belongs to the thymidine kinase family.

The catalysed reaction is thymidine + ATP = dTMP + ADP + H(+). Phosphorylates thymidine. ASFV replicates in the cytoplasm of infected cells and contains genes encoding a number of enzymes needed for DNA synthesis, including thymidine kinase. Important for growth in swine macrophages in vitro and is a virus virulence factor in swine. The protein is Thymidine kinase of Ornithodoros (relapsing fever ticks).